The following is a 93-amino-acid chain: NADH-dependent phenylglyoxylate dehydrogenase subunit delta (93 aa).

2 consecutive 4Fe-4S ferredoxin-type domains span residues 39 to 68 and 66 to 93; these read MRPV…EHAA and HAAW…RRSR.

Dimer of heteropentamers composed of an alpha (PadG), a beta (PadI), a gamma (PadE), a delta (PadF) and an epsilon (PadH) subunit. [4Fe-4S] cluster is required as a cofactor.

It carries out the reaction phenylglyoxylate + NAD(+) + CoA = benzoyl-CoA + CO2 + NADH. Its activity is regulated as follows. Activated by magnesium ions and thiamine diphosphate. Its function is as follows. Involved in the anaerobic metabolism of phenylalanine and phenylacetate. Catalyzes the oxidative decarboxylation of phenylglyoxylate to benzoyl-CoA and CO(2). It can also react slowly with 2-oxo-3-methylbutanoate and use different electron acceptors such as benzyl viologen, methyl viologen, FAD or FMN, but NAD seems to be the physiological electron acceptor. Also catalyzes an isotope exchange between CO(2) and the carboxyl group which proves partial or complete reversibility of the oxidative decarboxylation reaction. The protein is NADH-dependent phenylglyoxylate dehydrogenase subunit delta (padF) of Aromatoleum evansii (Azoarcus evansii).